The primary structure comprises 432 residues: Glutamate-1-semialdehyde 2,1-aminomutase (432 aa).

Lysine 272 is subject to N6-(pyridoxal phosphate)lysine.

Belongs to the class-III pyridoxal-phosphate-dependent aminotransferase family. HemL subfamily. As to quaternary structure, homodimer. The cofactor is pyridoxal 5'-phosphate.

Its subcellular location is the cytoplasm. It carries out the reaction (S)-4-amino-5-oxopentanoate = 5-aminolevulinate. Its pathway is porphyrin-containing compound metabolism; protoporphyrin-IX biosynthesis; 5-aminolevulinate from L-glutamyl-tRNA(Glu): step 2/2. It functions in the pathway porphyrin-containing compound metabolism; chlorophyll biosynthesis. This chain is Glutamate-1-semialdehyde 2,1-aminomutase, found in Trichormus variabilis (strain ATCC 29413 / PCC 7937) (Anabaena variabilis).